Consider the following 103-residue polypeptide: N(4)-acetylcytidine amidohydrolase (103 aa).

Residues 6 to 101 (ITFFQRFQDD…QIQFYVIEFK (96 aa)) enclose the ASCH domain. Lysine 21 serves as the catalytic Proton acceptor. Catalysis depends on threonine 24, which acts as the Nucleophile. Glutamate 74 serves as the catalytic Proton donor.

This sequence belongs to the N(4)-acetylcytidine amidohydrolase family.

It carries out the reaction N(4)-acetylcytidine + H2O = cytidine + acetate + H(+). It catalyses the reaction N(4)-acetyl-2'-deoxycytidine + H2O = 2'-deoxycytidine + acetate + H(+). The catalysed reaction is N(4)-acetylcytosine + H2O = cytosine + acetate + H(+). Catalyzes the hydrolysis of N(4)-acetylcytidine (ac4C). In Escherichia coli (strain SMS-3-5 / SECEC), this protein is N(4)-acetylcytidine amidohydrolase (yqfB).